The following is a 404-amino-acid chain: Voltage-gated potassium channel subunit beta-3 (404 aa).

Polar residues predominate over residues 1–14 (MQVSIACTEQNLRS). The segment at 1–77 (MQVSIACTEQ…LRESTGRGTG (77 aa)) is disordered. The span at 28-50 (PGGGNGGPAGGGHGNPPGGGGSG) shows a compositional bias: gly residues. 4 residues coordinate NADP(+): threonine 97, tryptophan 98, glutamine 104, and aspartate 126. Tyrosine 131 (proton donor/acceptor) is an active-site residue. NADP(+) contacts are provided by asparagine 199, serine 229, arginine 230, glutamine 255, tryptophan 284, proline 286, leucine 287, alanine 288, cysteine 289, lysine 295, arginine 305, glycine 364, serine 366, glutamine 370, and glutamate 373.

It belongs to the shaker potassium channel beta subunit family. Forms heteromultimeric complex with alpha subunits. Interacts with KCNA5 and KCNB2. In terms of tissue distribution, brain specific. Most prominent expression in cerebellum. Weaker signals detected in cortex, occipital lobe, frontal lobe and temporal lobe. Not detected in spinal cord, heart, lung, liver, kidney, pancreas, placenta and skeletal muscle.

The protein resides in the cytoplasm. Regulatory subunit of the voltage-gated potassium (Kv) channels composed of pore-forming and potassium-conducting alpha subunits and of regulatory beta subunit. The beta-3/KCNAB3 subunit may mediate closure of potassium channels. Increases inactivation of Kv1.5/KCNA5 alpha subunit-containing channels. May display nicotinamide adenine dinucleotide phosphate (NADPH)-dependent aldoketoreductase activity. The binding of oxidized and reduced NADP(H) cofactors may be required for the regulation of potassium channel activity. This chain is Voltage-gated potassium channel subunit beta-3, found in Homo sapiens (Human).